Reading from the N-terminus, the 141-residue chain is ATP synthase epsilon chain (141 aa).

The protein belongs to the ATPase epsilon chain family. As to quaternary structure, F-type ATPases have 2 components, CF(1) - the catalytic core - and CF(0) - the membrane proton channel. CF(1) has five subunits: alpha(3), beta(3), gamma(1), delta(1), epsilon(1). CF(0) has three main subunits: a, b and c.

It localises to the cell inner membrane. Functionally, produces ATP from ADP in the presence of a proton gradient across the membrane. The protein is ATP synthase epsilon chain of Burkholderia thailandensis (strain ATCC 700388 / DSM 13276 / CCUG 48851 / CIP 106301 / E264).